Reading from the N-terminus, the 475-residue chain is Nucleoporin-like protein amo1 (475 aa).

The C3H1-type zinc-finger motif lies at 1–25 (MVVCKYFLQNRCRYGTNCKNQHTVP). A compositionally biased stretch (polar residues) spans 165–182 (DKSTSNSTVTSNQFNKPT). 2 disordered regions span residues 165–208 (DKST…DIFG) and 220–252 (NASP…SSFG). A compositionally biased stretch (low complexity) spans 183-204 (QNSPFNSFSNNNNSFNNNQQAN). The segment covering 220-242 (NASPFSQNTSSNSFTGSNPVQNN) has biased composition (polar residues). Residues 243–252 (PSSFGSSSFG) are compositionally biased toward low complexity.

The protein localises to the nucleus. Its function is as follows. Involved in the cell polarity process where it is required for the correct termination of microtubule growth at the cell ends during interphase. The sequence is that of Nucleoporin-like protein amo1 (amo1) from Schizosaccharomyces pombe (strain 972 / ATCC 24843) (Fission yeast).